The chain runs to 852 residues: Metastasis-associated in colon cancer protein 1 (852 aa).

At serine 19 the chain carries Phosphoserine. A ZU5 domain is found at 212–349 (VTIACKVNHQ…LSQVMYLVVA (138 aa)). Residues 549 to 619 (NFSNYGVTLK…HCKNVKVISK (71 aa)) enclose the SH3 domain.

As to quaternary structure, interacts with FASLG. In terms of tissue distribution, preferentially expressed in metastasizing tumors.

The protein resides in the cytoplasm. Its subcellular location is the nucleus. Its function is as follows. Acts as a transcription activator for MET and as a key regulator of HGF-MET signaling. Promotes cell motility, proliferation and hepatocyte growth factor (HGF)-dependent scattering in vitro and tumor growth and metastasis in vivo. The polypeptide is Metastasis-associated in colon cancer protein 1 (MACC1) (Homo sapiens (Human)).